Reading from the N-terminus, the 295-residue chain is Ethanolamine ammonia-lyase small subunit (295 aa).

Adenosylcob(III)alamin is bound by residues Val-207, Glu-228, and Cys-258.

This sequence belongs to the EutC family. As to quaternary structure, the basic unit is a heterodimer which dimerizes to form tetramers. The heterotetramers trimerize; 6 large subunits form a core ring with 6 small subunits projecting outwards. Requires adenosylcob(III)alamin as cofactor.

The protein localises to the bacterial microcompartment. It carries out the reaction ethanolamine = acetaldehyde + NH4(+). It functions in the pathway amine and polyamine degradation; ethanolamine degradation. In terms of biological role, catalyzes the deamination of various vicinal amino-alcohols to oxo compounds. Allows this organism to utilize ethanolamine as the sole source of nitrogen and carbon in the presence of external vitamin B12. This chain is Ethanolamine ammonia-lyase small subunit, found in Escherichia coli O139:H28 (strain E24377A / ETEC).